A 1033-amino-acid chain; its full sequence is Potassium-transporting ATPase alpha chain 1 (1033 aa).

Over 1–96 (MGKENYELYS…NALRPPRGTP (96 aa)) the chain is Cytoplasmic. Residues Y6 and Y9 each carry the phosphotyrosine modification. A disordered region spans residues 14 to 39 (GTGPGGDMAAKMSKKKAGGGGGKKKE). The span at 25-38 (MSKKKAGGGGGKKK) shows a compositional bias: basic residues. S26 bears the Phosphoserine mark. A helical membrane pass occupies residues 97 to 117 (EYVKFARQLAGGLQCLMWVAA). At 118–140 (AICLIAFAIQASEGDLTTDDNLY) the chain is on the lumenal side. The helical transmembrane segment at 141–161 (LALALIAVVVVTGCFGYYQEF) threads the bilayer. The Cytoplasmic portion of the chain corresponds to 162 to 297 (KSTNIIASFK…NEKTPIAIEI (136 aa)). The chain crosses the membrane as a helical span at residues 298 to 317 (EHFVDIIAGLAILFGATFFV). Topologically, residues 318–329 (VAMCIGYTFLRA) are lumenal. The helical transmembrane segment at 330–347 (MVFFMAIVVAYVPEGLLA) threads the bilayer. Residues V338, A339, V341, and E343 each coordinate K(+). Residues 348 to 781 (TVTVCLSLTA…EQGRLIFDNL (434 aa)) lie on the Cytoplasmic side of the membrane. The 4-aspartylphosphate intermediate role is filled by D385. Residues D385 and T387 each coordinate Mg(2+). A phosphoserine mark is found at S461 and S599. D726 and D730 together coordinate Mg(2+). A helical membrane pass occupies residues 782-801 (KKSIAYTLTKNIPELTPYLI). E795 provides a ligand contact to K(+). Over 802–811 (YITVSVPLPL) the chain is Lumenal. Residues 812–832 (GCITILFIELCTDIFPSVSLA) traverse the membrane as a helical segment. K(+) is bound at residue E820. The Cytoplasmic segment spans residues 833 to 852 (YEKAESDIMHLRPRNPRRDR). Residue S838 is modified to Phosphoserine. A helical transmembrane segment spans residues 853-875 (LVNEPLAAYSYFQIGAIQSFAGF). Topologically, residues 876 to 927 (ADYFTAMAQEGWFPLLCVGLRPQWEDHHLQDLQDSYGQEWTFGQRLYQQYTC) are lumenal. The chain crosses the membrane as a helical span at residues 928–947 (YTVFFISIEMCQIADVLIRK). Residues 948–961 (TRRLSAFQQGFFRN) are Cytoplasmic-facing. S952 carries the phosphoserine; by PKA modification. Residues 962–980 (RILVIAIVFQVCIGCFLCY) form a helical membrane-spanning segment. Residues 981 to 995 (CPGMPNIFNFMPIRF) lie on the Lumenal side of the membrane. The helical transmembrane segment at 996 to 1016 (QWWLVPMPFGLLIFVYDEIRK) threads the bilayer. The Cytoplasmic portion of the chain corresponds to 1017–1033 (LGVRCCPGSWWDQELYY).

The protein belongs to the cation transport ATPase (P-type) (TC 3.A.3) family. Type IIC subfamily. The gastric H(+)/K(+) ATPase pump is composed of the catalytic alpha subunit ATP4A and the regulatory beta subunit ATP4B. Interacts (via the P-domain) with ATP4B (via N-terminus); this interaction stabilizes the lumenal-open E2 conformation state and prevents the reverse reaction of the transport cycle.

The protein resides in the apical cell membrane. The catalysed reaction is K(+)(out) + ATP + H2O + H(+)(in) = K(+)(in) + ADP + phosphate + 2 H(+)(out). Functionally, the catalytic subunit of the gastric H(+)/K(+) ATPase pump which transports H(+) ions in exchange for K(+) ions across the apical membrane of parietal cells. Uses ATP as an energy source to pump H(+) ions to the gastric lumen while transporting K(+) ion from the lumen into the cell. Remarkably generates a million-fold proton gradient across the gastric parietal cell membrane, acidifying the gastric juice down to pH 1. Within a transport cycle, the transfer of a H(+) ion across the membrane is coupled to ATP hydrolysis and is associated with a transient phosphorylation that shifts the pump conformation from inward-facing (E1) to outward-facing state (E2). The release of the H(+) ion in the stomach lumen is followed by binding of K(+) ion converting the pump conformation back to the E1 state. This Rattus norvegicus (Rat) protein is Potassium-transporting ATPase alpha chain 1 (Atp4a).